A 523-amino-acid chain; its full sequence is GMP synthase [glutamine-hydrolyzing] (523 aa).

The Glutamine amidotransferase type-1 domain maps to 9–198 (PVLVVDFGAQ…LTEIAGLEQN (190 aa)). The Nucleophile role is filled by cysteine 86. Catalysis depends on residues histidine 172 and glutamate 174. The GMPS ATP-PPase domain occupies 199-397 (WTAANIAEEL…LGLPEEIVGR (199 aa)). Residue 227–233 (SGGVDSA) coordinates ATP.

In terms of assembly, homodimer.

The catalysed reaction is XMP + L-glutamine + ATP + H2O = GMP + L-glutamate + AMP + diphosphate + 2 H(+). Its pathway is purine metabolism; GMP biosynthesis; GMP from XMP (L-Gln route): step 1/1. In terms of biological role, catalyzes the synthesis of GMP from XMP. This Corynebacterium glutamicum (strain ATCC 13032 / DSM 20300 / JCM 1318 / BCRC 11384 / CCUG 27702 / LMG 3730 / NBRC 12168 / NCIMB 10025 / NRRL B-2784 / 534) protein is GMP synthase [glutamine-hydrolyzing].